We begin with the raw amino-acid sequence, 304 residues long: Ribonuclease Z (304 aa).

Zn(2+)-binding residues include His63, His65, Asp67, His68, His141, Asp208, and His266. Asp67 (proton acceptor) is an active-site residue.

Belongs to the RNase Z family. In terms of assembly, homodimer. The cofactor is Zn(2+).

The enzyme catalyses Endonucleolytic cleavage of RNA, removing extra 3' nucleotides from tRNA precursor, generating 3' termini of tRNAs. A 3'-hydroxy group is left at the tRNA terminus and a 5'-phosphoryl group is left at the trailer molecule.. Its function is as follows. Zinc phosphodiesterase, which displays some tRNA 3'-processing endonuclease activity. Probably involved in tRNA maturation, by removing a 3'-trailer from precursor tRNA. This chain is Ribonuclease Z, found in Chlamydia trachomatis serovar L2 (strain ATCC VR-902B / DSM 19102 / 434/Bu).